A 352-amino-acid polypeptide reads, in one-letter code: ADP-ribosylation factor GTPase-activating protein GCS1 (352 aa).

Residues 11-127 enclose the Arf-GAP domain; sequence RRRLLQLQKI…LTCLCEDRVF (117 aa). Residues 26 to 49 form a C4-type zinc finger; it reads CMDCGAPNPQWATPKFGAFICLEC. The span at 138 to 151 shows a compositional bias: low complexity; the sequence is SKLSATSQTAASAT. Disordered regions lie at residues 138–181 and 196–231; these read SKLS…ANFQ and NQSR…GSSN. Thr151 carries the phosphothreonine modification. A Phosphoserine modification is found at Ser157. Thr161 is subject to Phosphothreonine. A Phosphoserine modification is found at Ser168. Residues 168-179 show a composition bias toward polar residues; it reads SATPANSSNGAN. Thr170 is modified (phosphothreonine). Ser260 bears the Phosphoserine mark. Positions 315–330 are enriched in polar residues; the sequence is NGNAEDSSTAGNTTHT. The disordered stretch occupies residues 315–352; the sequence is NGNAEDSSTAGNTTHTEYQKIDNNDKKNEQDEDKWDDF. Over residues 331-343 the composition is skewed to basic and acidic residues; the sequence is EYQKIDNNDKKNE.

The protein localises to the cytoplasm. The protein resides in the mitochondrion. It localises to the perinuclear region. It is found in the golgi apparatus. Its function is as follows. GTPase-activating protein (GAP) for ARF1 and ARF2. Involved in intracellular vesicular transport. Required for transport from the trans-Golgi network. Implicated in the regulation of retrograde transport from the Golgi to the ER and in actin cytoskeletal organization. May be involved in the maintenance of mitochondrial morphology, possibly through organizing the actin cytoskeleton in Saccharomyces. The chain is ADP-ribosylation factor GTPase-activating protein GCS1 (GCS1) from Saccharomyces cerevisiae (strain ATCC 204508 / S288c) (Baker's yeast).